The chain runs to 338 residues: Phenylalanine--tRNA ligase alpha subunit (338 aa).

Mg(2+) is bound at residue E252.

Belongs to the class-II aminoacyl-tRNA synthetase family. Phe-tRNA synthetase alpha subunit type 1 subfamily. Tetramer of two alpha and two beta subunits. It depends on Mg(2+) as a cofactor.

The protein resides in the cytoplasm. The enzyme catalyses tRNA(Phe) + L-phenylalanine + ATP = L-phenylalanyl-tRNA(Phe) + AMP + diphosphate + H(+). The chain is Phenylalanine--tRNA ligase alpha subunit from Mycoplasmoides gallisepticum (strain R(low / passage 15 / clone 2)) (Mycoplasma gallisepticum).